A 393-amino-acid chain; its full sequence is MDLFEYQARDLFAKHGVPVLAGEVIDTPEAAREATEKLGGKSVVKAQVKVGGRGKAGGVKLAADPDEAVARATDILGMDIKGHTVHKVMIAELSPEIEAEYYVSYLLDRTNRTFLAMASVQGGMDIEEVAEKTPEALAKVPVNAVDGVDIAKAREIVAQAKFPADVAEGVAEALVTLWDTFVAEDALLVEVNPLVKTKDGRILALDGKVSLDENADFRQPDHEALEDKDAANPLEAAAKAKNLNYVKLDGEVGIIGNGAGLVMSTLDVVAYAGENHGNVKPANFLDIGGGASAEVMANGLEIILGDPDVRSVFVNVFGGITACDEVANGIVQALALLESKGEKVEKPLVVRLDGNNAELGRKILSDANHPLVQRVDTMDGAADKAAELAAAAK.

One can recognise an ATP-grasp domain in the interval 9–237 (RDLFAKHGVP…KDAANPLEAA (229 aa)). ATP-binding positions include Lys45, 52–54 (GRG), Glu92, Pro95, and Glu100. Mg(2+)-binding residues include Asn192 and Asp206. Substrate is bound by residues Asn257 and 319–321 (GIT).

This sequence belongs to the succinate/malate CoA ligase beta subunit family. In terms of assembly, heterotetramer of two alpha and two beta subunits. Requires Mg(2+) as cofactor.

It catalyses the reaction succinate + ATP + CoA = succinyl-CoA + ADP + phosphate. The catalysed reaction is GTP + succinate + CoA = succinyl-CoA + GDP + phosphate. Its pathway is carbohydrate metabolism; tricarboxylic acid cycle; succinate from succinyl-CoA (ligase route): step 1/1. Succinyl-CoA synthetase functions in the citric acid cycle (TCA), coupling the hydrolysis of succinyl-CoA to the synthesis of either ATP or GTP and thus represents the only step of substrate-level phosphorylation in the TCA. The beta subunit provides nucleotide specificity of the enzyme and binds the substrate succinate, while the binding sites for coenzyme A and phosphate are found in the alpha subunit. The sequence is that of Succinate--CoA ligase [ADP-forming] subunit beta from Streptomyces griseus subsp. griseus (strain JCM 4626 / CBS 651.72 / NBRC 13350 / KCC S-0626 / ISP 5235).